The chain runs to 296 residues: Cytidine deaminase (296 aa).

CMP/dCMP-type deaminase domains are found at residues 47-167 and 186-296; these read TEAE…FGPK and DSSD…VDPV. Residue 88-90 coordinates substrate; the sequence is NLE. Zn(2+) is bound at residue His-101. Glu-103 acts as the Proton donor in catalysis. Zn(2+) is bound by residues Cys-128 and Cys-131.

The protein belongs to the cytidine and deoxycytidylate deaminase family. As to quaternary structure, homodimer. Requires Zn(2+) as cofactor.

The enzyme catalyses cytidine + H2O + H(+) = uridine + NH4(+). It carries out the reaction 2'-deoxycytidine + H2O + H(+) = 2'-deoxyuridine + NH4(+). Functionally, this enzyme scavenges exogenous and endogenous cytidine and 2'-deoxycytidine for UMP synthesis. The polypeptide is Cytidine deaminase (Shewanella sp. (strain W3-18-1)).